Reading from the N-terminus, the 385-residue chain is Hsp70/Hsp90 co-chaperone CNS1 (385 aa).

Positions 1–37 (MSSVNANGGYTKPQKYVPGPGDPELPPQLSEFKDKTS) are disordered. TPR repeat units lie at residues 83 to 116 (AENF…ECED), 121 to 154 (ESLY…NPKN), and 155 to 189 (VKCY…DPEN).

It belongs to the TTC4 family. Monomer. Component of Hsp70 and Hsp90 chaperone complexes. Interacts (via TPR repeats) with HSC82 and HSP82 (via C-terminal MEEVD pentapeptide). Interacts with CPR7, SSA1 and SPI1.

It is found in the cytoplasm. In terms of biological role, co-chaperone that binds to the molecular chaperones Hsp90 (HSC82 and HSP82) and Hsp70 (SSA1). Stimulates SSA1 ATPase activity, but not Hsp90 ATPase activity. Involved in only a subset of Hsp90 functions. In Saccharomyces cerevisiae (strain ATCC 204508 / S288c) (Baker's yeast), this protein is Hsp70/Hsp90 co-chaperone CNS1 (CNS1).